The sequence spans 38 residues: Photosystem II reaction center protein L (38 aa).

A helical transmembrane segment spans residues 17 to 37; it reads SLYWGLLLIFVLAVLFSSYIF.

The protein belongs to the PsbL family. PSII is composed of 1 copy each of membrane proteins PsbA, PsbB, PsbC, PsbD, PsbE, PsbF, PsbH, PsbI, PsbJ, PsbK, PsbL, PsbM, PsbT, PsbX, PsbY, PsbZ, Psb30/Ycf12, at least 3 peripheral proteins of the oxygen-evolving complex and a large number of cofactors. It forms dimeric complexes.

It is found in the plastid. The protein localises to the chloroplast thylakoid membrane. Its function is as follows. One of the components of the core complex of photosystem II (PSII). PSII is a light-driven water:plastoquinone oxidoreductase that uses light energy to abstract electrons from H(2)O, generating O(2) and a proton gradient subsequently used for ATP formation. It consists of a core antenna complex that captures photons, and an electron transfer chain that converts photonic excitation into a charge separation. This subunit is found at the monomer-monomer interface and is required for correct PSII assembly and/or dimerization. This is Photosystem II reaction center protein L from Oltmannsiellopsis viridis (Marine flagellate).